Consider the following 210-residue polypeptide: Large ribosomal subunit protein uL3 (210 aa).

Residues 126–152 (HGFRGGPKTHGQSDRHRAPGSIGAGTT) form a disordered region.

The protein belongs to the universal ribosomal protein uL3 family. Part of the 50S ribosomal subunit. Forms a cluster with proteins L14 and L19.

One of the primary rRNA binding proteins, it binds directly near the 3'-end of the 23S rRNA, where it nucleates assembly of the 50S subunit. This Chloroflexus aurantiacus (strain ATCC 29366 / DSM 635 / J-10-fl) protein is Large ribosomal subunit protein uL3.